The primary structure comprises 89 residues: Small ribosomal subunit protein uS15 (89 aa).

The protein belongs to the universal ribosomal protein uS15 family. Part of the 30S ribosomal subunit. Forms a bridge to the 50S subunit in the 70S ribosome, contacting the 23S rRNA.

One of the primary rRNA binding proteins, it binds directly to 16S rRNA where it helps nucleate assembly of the platform of the 30S subunit by binding and bridging several RNA helices of the 16S rRNA. Its function is as follows. Forms an intersubunit bridge (bridge B4) with the 23S rRNA of the 50S subunit in the ribosome. The chain is Small ribosomal subunit protein uS15 from Shewanella halifaxensis (strain HAW-EB4).